A 100-amino-acid polypeptide reads, in one-letter code: Small ribosomal subunit protein uS14c (100 aa).

Belongs to the universal ribosomal protein uS14 family. In terms of assembly, part of the 30S ribosomal subunit.

The protein resides in the plastid. Binds 16S rRNA, required for the assembly of 30S particles. This is Small ribosomal subunit protein uS14c (rps14) from Cuscuta gronovii (Common dodder).